Consider the following 467-residue polypeptide: Mitogen-activated protein kinase kinase kinase 8 (467 aa).

Phosphothreonine is present on T80. S138 and S141 each carry phosphoserine. Residues 144–152 and K167 contribute to the ATP site; that span reads VPRGAFGKV. Residues 146–388 form the Protein kinase domain; sequence RGAFGKVYLA…AADLLKHEAL (243 aa). Residue D253 is the Proton acceptor of the active site. Phosphothreonine is present on T290. S400 and S443 each carry phosphoserine.

The protein belongs to the protein kinase superfamily. STE Ser/Thr protein kinase family. MAP kinase kinase kinase subfamily. In terms of assembly, forms a ternary complex with NFKB1/p105 and TNIP2. Interacts with NFKB1; the interaction increases the stability of MAP3K8 but inhibits its MEK phosphorylation activity, whereas loss of interaction following LPS stimulation leads to its degradation. Interacts with CD40 and TRAF6; the interaction is required for ERK activation. Interacts with KSR2; the interaction inhibits ERK and NF-kappa-B activation. Mg(2+) serves as cofactor. In terms of processing, autophosphorylated. As to expression, expressed in spleen, thymus, liver and lung.

The protein localises to the cytoplasm. The catalysed reaction is L-seryl-[protein] + ATP = O-phospho-L-seryl-[protein] + ADP + H(+). The enzyme catalyses L-threonyl-[protein] + ATP = O-phospho-L-threonyl-[protein] + ADP + H(+). In terms of biological role, required for lipopolysaccharide (LPS)-induced, TLR4-mediated activation of the MAPK/ERK pathway in macrophages, thus being critical for production of the pro-inflammatory cytokine TNF-alpha (TNF) during immune responses. Involved in the regulation of T-helper cell differentiation and IFNG expression in T-cells. Involved in mediating host resistance to bacterial infection through negative regulation of type I interferon (IFN) production. Transduces CD40 and TNFRSF1A signals that activate ERK in B-cells and macrophages, and thus may play a role in the regulation of immunoglobulin production. May also play a role in the transduction of TNF signals that activate JNK and NF-kappa-B in some cell types. In adipocytes, activates MAPK/ERK pathway in an IKBKB-dependent manner in response to IL1B and TNF, but not insulin, leading to induction of lipolysis. Plays a role in the cell cycle. This Rattus norvegicus (Rat) protein is Mitogen-activated protein kinase kinase kinase 8 (Map3k8).